Reading from the N-terminus, the 352-residue chain is Phenylalanine--tRNA ligase alpha subunit (352 aa).

Residue E258 participates in Mg(2+) binding.

This sequence belongs to the class-II aminoacyl-tRNA synthetase family. Phe-tRNA synthetase alpha subunit type 1 subfamily. Tetramer of two alpha and two beta subunits. Mg(2+) serves as cofactor.

It is found in the cytoplasm. It catalyses the reaction tRNA(Phe) + L-phenylalanine + ATP = L-phenylalanyl-tRNA(Phe) + AMP + diphosphate + H(+). In Staphylococcus epidermidis (strain ATCC 35984 / DSM 28319 / BCRC 17069 / CCUG 31568 / BM 3577 / RP62A), this protein is Phenylalanine--tRNA ligase alpha subunit.